A 972-amino-acid chain; its full sequence is Serine/threonine-protein kinase ATG1 (972 aa).

Positions 18–319 (YVVEKEIGRG…FTEFFSNGLV (302 aa)) constitute a Protein kinase domain. Residues 24-32 (IGRGSFAVV) and lysine 48 each bind ATP. Catalysis depends on aspartate 166, which acts as the Proton acceptor. Disordered stretches follow at residues 359-394 (KRASPIRLGDSCTLRGPCESPQGADPYPQDNTQSDQ), 424-444 (YNNQEERSNEERQFGQVSNGR), 467-506 (ALQSHSHVAAKQIPDKDSKSSVSCQKHAASAPTKNDHRTT), 562-605 (ASQA…SRRP), and 743-764 (DDEEDDIEHSPGAETYRKNSSG). Basic and acidic residues predominate over residues 424–436 (YNNQEERSNEERQ). The segment covering 562–584 (ASQALQMARHSSTSVSAANTAKQ) has biased composition (polar residues). Residues 585 to 605 (TLLRRNSRTLSSSGASTSRRP) show a composition bias toward low complexity. The span at 750–759 (EHSPGAETYR) shows a compositional bias: basic and acidic residues.

Belongs to the protein kinase superfamily. Ser/Thr protein kinase family. APG1/unc-51/ULK1 subfamily. In terms of assembly, homodimer. Forms a ternary complex with ATG13 and ATG17.

The protein resides in the cytoplasm. It is found in the preautophagosomal structure membrane. The catalysed reaction is L-seryl-[protein] + ATP = O-phospho-L-seryl-[protein] + ADP + H(+). It catalyses the reaction L-threonyl-[protein] + ATP = O-phospho-L-threonyl-[protein] + ADP + H(+). In terms of biological role, serine/threonine protein kinase involved in the cytoplasm to vacuole transport (Cvt) and found to be essential in autophagy, where it is required for the formation of autophagosomes. Involved in the clearance of protein aggregates which cannot be efficiently cleared by the proteasome. Required for selective autophagic degradation of the nucleus (nucleophagy) as well as for mitophagy which contributes to regulate mitochondrial quantity and quality by eliminating the mitochondria to a basal level to fulfill cellular energy requirements and preventing excess ROS production. Also involved in endoplasmic reticulum-specific autophagic process, in selective removal of ER-associated degradation (ERAD) substrates. Plays a key role in ATG9 and ATG23 cycling through the pre-autophagosomal structure and is necessary to promote ATG18 binding to ATG9 through phosphorylation of ATG9. Catalyzes phosphorylation of ATG4, decreasing the interaction between ATG4 and ATG8 and impairing deconjugation of PE-conjugated forms of ATG8. The polypeptide is Serine/threonine-protein kinase ATG1 (Eremothecium gossypii (strain ATCC 10895 / CBS 109.51 / FGSC 9923 / NRRL Y-1056) (Yeast)).